The primary structure comprises 160 residues: Probable chemoreceptor glutamine deamidase CheD 1 (160 aa).

It belongs to the CheD family.

The catalysed reaction is L-glutaminyl-[protein] + H2O = L-glutamyl-[protein] + NH4(+). Functionally, probably deamidates glutamine residues to glutamate on methyl-accepting chemotaxis receptors (MCPs), playing an important role in chemotaxis. The sequence is that of Probable chemoreceptor glutamine deamidase CheD 1 from Syntrophus aciditrophicus (strain SB).